Consider the following 193-residue polypeptide: MHKLVIATWNKEKRDELSRYFQQMDVSIQSLRGDIPDVKETGATFIENARLKAEAVRQYEPTAIIVAEDSGLCVDALDGFPNVRTARFMEGTDDERAAKVLQRLGDRPMSERTAVFQSAVVILFPDGLMRTAVGKIEGWITYGPVKDGQGYGGIFILCDEQLLAENIQMARCNHRSQAIRQAVYYMEEWLVTV.

Belongs to the HAM1 NTPase family.

In Halalkalibacterium halodurans (strain ATCC BAA-125 / DSM 18197 / FERM 7344 / JCM 9153 / C-125) (Bacillus halodurans), this protein is Non-canonical purine NTP pyrophosphatase homolog.